Reading from the N-terminus, the 1233-residue chain is Pesticidal crystal protein Cry1Bc (1233 aa).

This sequence belongs to the delta endotoxin family.

Promotes colloidosmotic lysis by binding to the midgut epithelial cells of insects. This Bacillus thuringiensis subsp. morrisoni protein is Pesticidal crystal protein Cry1Bc (cry1Bc).